A 198-amino-acid polypeptide reads, in one-letter code: Peptide methionine sulfoxide reductase MsrA 2 (198 aa).

The active site involves cysteine 32.

This sequence belongs to the MsrA Met sulfoxide reductase family.

It carries out the reaction L-methionyl-[protein] + [thioredoxin]-disulfide + H2O = L-methionyl-(S)-S-oxide-[protein] + [thioredoxin]-dithiol. The catalysed reaction is [thioredoxin]-disulfide + L-methionine + H2O = L-methionine (S)-S-oxide + [thioredoxin]-dithiol. In terms of biological role, has an important function as a repair enzyme for proteins that have been inactivated by oxidation. Catalyzes the reversible oxidation-reduction of methionine sulfoxide in proteins to methionine. This chain is Peptide methionine sulfoxide reductase MsrA 2 (msrA2), found in Rhizobium meliloti (strain 1021) (Ensifer meliloti).